The following is a 466-amino-acid chain: 3-isopropylmalate dehydratase large subunit (466 aa).

[4Fe-4S] cluster is bound by residues Cys-347, Cys-407, and Cys-410.

Belongs to the aconitase/IPM isomerase family. LeuC type 1 subfamily. As to quaternary structure, heterodimer of LeuC and LeuD. [4Fe-4S] cluster is required as a cofactor.

It catalyses the reaction (2R,3S)-3-isopropylmalate = (2S)-2-isopropylmalate. Its pathway is amino-acid biosynthesis; L-leucine biosynthesis; L-leucine from 3-methyl-2-oxobutanoate: step 2/4. Functionally, catalyzes the isomerization between 2-isopropylmalate and 3-isopropylmalate, via the formation of 2-isopropylmaleate. The polypeptide is 3-isopropylmalate dehydratase large subunit (Serratia proteamaculans (strain 568)).